Consider the following 334-residue polypeptide: MARDEVRRILPADIKREVIVKDDKAETNPKWGFPPDKRPIELHIQYGVINLDKPPGPTSHEVVAWIKRILNLEKAGHGGTLDPKVSGVLPVALERATRVVQALLPAGKEYVALMHLHGDVPEDKIRAVMKEFEGEIIQRPPLRSAVKRRLRTRKVYYIEILEIDGRDVLFRVGVEAGTYIRSLIHHIGLALGVGAHMAELRRTRSGPFKEDETLVTLHDLVDYYHFWKEDGIEEYIRKAIQPMEKAVEHLPKIWIKDSAVAAVAHGANLTVPGIVKLNAGIKKGDLVAIMTLKDELVALGKAMMSTQEMIERSKGIAVDVEKVFMPRDWYPKLW.

D82 (nucleophile) is an active-site residue. In terms of domain architecture, PUA spans 250–325 (LPKIWIKDSA…IAVDVEKVFM (76 aa)).

This sequence belongs to the pseudouridine synthase TruB family. Type 2 subfamily.

The enzyme catalyses uridine(55) in tRNA = pseudouridine(55) in tRNA. In terms of biological role, could be responsible for synthesis of pseudouridine from uracil-55 in the psi GC loop of transfer RNAs. The chain is Probable tRNA pseudouridine synthase B from Pyrococcus abyssi (strain GE5 / Orsay).